A 277-amino-acid polypeptide reads, in one-letter code: 5'-nucleotidase SurE (277 aa).

A divalent metal cation contacts are provided by D16, D17, S48, and N101.

It belongs to the SurE nucleotidase family. The cofactor is a divalent metal cation.

The protein localises to the cytoplasm. The enzyme catalyses a ribonucleoside 5'-phosphate + H2O = a ribonucleoside + phosphate. Its function is as follows. Nucleotidase that shows phosphatase activity on nucleoside 5'-monophosphates. The polypeptide is 5'-nucleotidase SurE (Parvibaculum lavamentivorans (strain DS-1 / DSM 13023 / NCIMB 13966)).